The following is a 534-amino-acid chain: ATP synthase subunit beta 2 (534 aa).

185-192 (GGAGVGKT) contacts ATP. Basic and acidic residues predominate over residues 494-505 (AAAREADARREA). Residues 494-534 (AAAREADARREAAAAASGAGPGTTSDPASGSAEPQGARHGR) form a disordered region.

This sequence belongs to the ATPase alpha/beta chains family. F-type ATPases have 2 components, CF(1) - the catalytic core - and CF(0) - the membrane proton channel. CF(1) has five subunits: alpha(3), beta(3), gamma(1), delta(1), epsilon(1). CF(0) has three main subunits: a(1), b(2) and c(9-12). The alpha and beta chains form an alternating ring which encloses part of the gamma chain. CF(1) is attached to CF(0) by a central stalk formed by the gamma and epsilon chains, while a peripheral stalk is formed by the delta and b chains.

It is found in the cell inner membrane. The enzyme catalyses ATP + H2O + 4 H(+)(in) = ADP + phosphate + 5 H(+)(out). In terms of biological role, produces ATP from ADP in the presence of a proton gradient across the membrane. The catalytic sites are hosted primarily by the beta subunits. The sequence is that of ATP synthase subunit beta 2 from Burkholderia mallei (strain NCTC 10247).